The following is a 1448-amino-acid chain: DNA-directed RNA polymerase subunit beta' (1448 aa).

Positions 66, 68, 81, and 84 each coordinate Zn(2+). 3 residues coordinate Mg(2+): Asp-474, Asp-476, and Asp-478. Cys-814, Cys-888, Cys-895, and Cys-898 together coordinate Zn(2+). A disordered region spans residues Leu-1408–Asn-1448.

It belongs to the RNA polymerase beta' chain family. As to quaternary structure, the RNAP catalytic core consists of 2 alpha, 1 beta, 1 beta' and 1 omega subunit. When a sigma factor is associated with the core the holoenzyme is formed, which can initiate transcription. The cofactor is Mg(2+). It depends on Zn(2+) as a cofactor.

It catalyses the reaction RNA(n) + a ribonucleoside 5'-triphosphate = RNA(n+1) + diphosphate. Functionally, DNA-dependent RNA polymerase catalyzes the transcription of DNA into RNA using the four ribonucleoside triphosphates as substrates. This chain is DNA-directed RNA polymerase subunit beta', found in Salinibacter ruber (strain DSM 13855 / M31).